The chain runs to 500 residues: Probable malate:quinone oxidoreductase (500 aa).

Belongs to the MQO family. Requires FAD as cofactor.

It catalyses the reaction (S)-malate + a quinone = a quinol + oxaloacetate. It functions in the pathway carbohydrate metabolism; tricarboxylic acid cycle; oxaloacetate from (S)-malate (quinone route): step 1/1. In Corynebacterium glutamicum (strain R), this protein is Probable malate:quinone oxidoreductase.